We begin with the raw amino-acid sequence, 363 residues long: Peptide-N(4)-(N-acetyl-beta-glucosaminyl)asparagine amidase (363 aa).

Positions 129, 132, 165, and 168 each coordinate Zn(2+). Cys-191 serves as the catalytic Nucleophile. Active-site residues include His-218 and Asp-235. Glu-238 contacts substrate. The segment at 325 to 363 (RGKTQETKSESVSAASKSSNRGRESGSADWKAQRGEDGK) is disordered. Positions 334–343 (ESVSAASKSS) are enriched in low complexity. The segment covering 345-363 (RGRESGSADWKAQRGEDGK) has biased composition (basic and acidic residues).

Belongs to the transglutaminase-like superfamily. PNGase family. As to quaternary structure, interacts with RAD23 subunit of 26S proteasome. The cofactor is Zn(2+).

The protein localises to the cytoplasm. It localises to the nucleus. It catalyses the reaction Hydrolysis of an N(4)-(acetyl-beta-D-glucosaminyl)asparagine residue in which the glucosamine residue may be further glycosylated, to yield a (substituted) N-acetyl-beta-D-glucosaminylamine and a peptide containing an aspartate residue.. Inhibited by Z-VAD-fmk, a well-known caspase inhibitor. Also inhibited by Man9GlcNAc2-iodoacetoamide. Both molecules inhibit enzyme activity through covalent binding of the carbohydrate to the single Cys-191 residue. In terms of biological role, specifically deglycosylates the denatured form of N-linked glycoproteins in the cytoplasm and assists their proteasome-mediated degradation. Cleaves the beta-aspartyl-glucosamine (GlcNAc) of the glycan and the amide side chain of Asn, converting Asn to Asp. Prefers proteins containing high-mannose over those bearing complex type oligosaccharides. Can recognize misfolded proteins in the endoplasmic reticulum that are exported to the cytosol to be destroyed and deglycosylate them, while it has no activity toward native proteins. Deglycosylation is a prerequisite for subsequent proteasome-mediated degradation of some, but not all, misfolded glycoproteins. Involved in the formation of free oligosaccharide in cytosol. This is Peptide-N(4)-(N-acetyl-beta-glucosaminyl)asparagine amidase (PNG1) from Saccharomyces cerevisiae (strain ATCC 204508 / S288c) (Baker's yeast).